The sequence spans 28 residues: LDVELTVEERNLLSVGYKDSTLIMQLLR.

It belongs to the 14-3-3 family.

In Pseudotsuga menziesii (Douglas-fir), this protein is 14-3-3-like protein 4.